Consider the following 61-residue polypeptide: Metallothionein-2 (61 aa).

Met1 is modified (N-acetylmethionine). A beta region spans residues 1–29 (MDPNCSCASDGSCSCAGACKCKQCKCTSC). A divalent metal cation is bound by residues Cys5, Cys7, Cys13, Cys15, Cys19, Cys21, Cys24, Cys26, Cys29, Cys33, Cys34, Cys36, Cys37, Cys41, Cys44, Cys48, Cys50, and Cys57. Residues 30–61 (KKSCCSCCPVGCAKCSQGCICKEASDKCSCCA) form an alpha region. Ser58 carries the post-translational modification Phosphoserine. Residues Cys59 and Cys60 each coordinate a divalent metal cation.

Belongs to the metallothionein superfamily. Type 1 family.

Its function is as follows. Metallothioneins have a high content of cysteine residues that bind various heavy metals; these proteins are transcriptionally regulated by both heavy metals and glucocorticoids. This is Metallothionein-2 (Mt2) from Mus musculus (Mouse).